A 660-amino-acid chain; its full sequence is Long chain acyl-CoA synthetase 1 (660 aa).

225–236 (IMYTSGTSGDPK) lines the ATP pocket. The fatty acid-binding stretch occupies residues 492–516 (DGWFHTGDIGEILPNGVLKIIDRKK).

The protein belongs to the ATP-dependent AMP-binding enzyme family. Mg(2+) serves as cofactor. As to expression, epidermal-specific expression along the entire stem. In cauline leaves, was expressed over the entire leaf surface, most strongly in trichomes and guard cells, but not in mesophyll cells. In flowers, the expression was detected in the stigma and filaments of the stamens, and in the carpel was expressed specifically in ovaries. In roots, was expressed in primary and lateral roots, but not in the root tips.

Its subcellular location is the endoplasmic reticulum. It carries out the reaction a long-chain fatty acid + ATP + CoA = a long-chain fatty acyl-CoA + AMP + diphosphate. The protein operates within lipid metabolism; fatty acid metabolism. In terms of biological role, activation of long-chain fatty acids for both synthesis of cellular lipids, and degradation via beta-oxidation. Acts in both the wax and cutin pathways. Preferentially uses palmitate, palmitoleate, linoleate and eicosenoate. Seems to have a specific activity against very long-chain fatty acid (VLCFA) class with acids longer than 24 carbons (C(24)). This chain is Long chain acyl-CoA synthetase 1 (LACS1), found in Arabidopsis thaliana (Mouse-ear cress).